We begin with the raw amino-acid sequence, 400 residues long: S-adenosylmethionine synthase (400 aa).

Residue 136–141 (GQGSVD) coordinates ATP.

It belongs to the AdoMet synthase 2 family. Mg(2+) serves as cofactor.

It carries out the reaction L-methionine + ATP + H2O = S-adenosyl-L-methionine + phosphate + diphosphate. It functions in the pathway amino-acid biosynthesis; S-adenosyl-L-methionine biosynthesis; S-adenosyl-L-methionine from L-methionine: step 1/1. Its function is as follows. Catalyzes the formation of S-adenosylmethionine from methionine and ATP. This Thermoplasma volcanium (strain ATCC 51530 / DSM 4299 / JCM 9571 / NBRC 15438 / GSS1) protein is S-adenosylmethionine synthase.